The following is a 96-amino-acid chain: Pro-glucagon (96 aa).

2 stretches are compositionally biased toward basic and acidic residues: residues 1–12 (LQDAEDSSRFDA) and 19–30 (EARELSTPKXHS). Residues 1–35 (LQDAEDSSRFDADDTLAGEARELSTPKXHSEGTFS) are disordered.

It belongs to the glucagon family.

It is found in the secreted. Plays a key role in glucose metabolism and homeostasis. Regulates blood glucose by increasing gluconeogenesis and decreasing glycolysis. In Myoxocephalus scorpius (Shorthorn sculpin), this protein is Pro-glucagon (gcg).